We begin with the raw amino-acid sequence, 63 residues long: Large ribosomal subunit protein bL32 (63 aa).

This sequence belongs to the bacterial ribosomal protein bL32 family.

This chain is Large ribosomal subunit protein bL32, found in Lactobacillus delbrueckii subsp. bulgaricus (strain ATCC 11842 / DSM 20081 / BCRC 10696 / JCM 1002 / NBRC 13953 / NCIMB 11778 / NCTC 12712 / WDCM 00102 / Lb 14).